The chain runs to 204 residues: Molybdenum cofactor guanylyltransferase (204 aa).

GTP-binding positions include 12–14, Lys-25, Asn-53, Asp-71, and Asp-101; that span reads LAG. Asp-101 is a Mg(2+) binding site.

The protein belongs to the MobA family. As to quaternary structure, monomer. Mg(2+) is required as a cofactor.

Its subcellular location is the cytoplasm. The enzyme catalyses Mo-molybdopterin + GTP + H(+) = Mo-molybdopterin guanine dinucleotide + diphosphate. Functionally, transfers a GMP moiety from GTP to Mo-molybdopterin (Mo-MPT) cofactor (Moco or molybdenum cofactor) to form Mo-molybdopterin guanine dinucleotide (Mo-MGD) cofactor. The protein is Molybdenum cofactor guanylyltransferase of Ralstonia pickettii (strain 12J).